A 387-amino-acid polypeptide reads, in one-letter code: 3-ketoacyl-CoA thiolase (387 aa).

C91 acts as the Acyl-thioester intermediate in catalysis. Catalysis depends on proton acceptor residues H343 and C373.

This sequence belongs to the thiolase-like superfamily. Thiolase family. Heterotetramer of two alpha chains (FadB) and two beta chains (FadA).

Its subcellular location is the cytoplasm. It carries out the reaction an acyl-CoA + acetyl-CoA = a 3-oxoacyl-CoA + CoA. Its pathway is lipid metabolism; fatty acid beta-oxidation. Its function is as follows. Catalyzes the final step of fatty acid oxidation in which acetyl-CoA is released and the CoA ester of a fatty acid two carbons shorter is formed. The chain is 3-ketoacyl-CoA thiolase from Yersinia pseudotuberculosis serotype O:1b (strain IP 31758).